The sequence spans 143 residues: Large ribosomal subunit protein uL16 (143 aa).

Basic residues predominate over residues 1–17 (MLQPKKTKFRRSQKGRM). The interval 1 to 25 (MLQPKKTKFRRSQKGRMKGNAQRGN) is disordered.

It belongs to the universal ribosomal protein uL16 family. In terms of assembly, part of the 50S ribosomal subunit.

Functionally, binds 23S rRNA and is also seen to make contacts with the A and possibly P site tRNAs. This Azobacteroides pseudotrichonymphae genomovar. CFP2 protein is Large ribosomal subunit protein uL16.